The primary structure comprises 394 residues: Elongation factor Tu 2 (394 aa).

The 195-residue stretch at 10–204 (KPHVNVGTIG…ALDSYIPEPE (195 aa)) folds into the tr-type G domain. The segment at 19 to 26 (GHVDHGKT) is G1. 19–26 (GHVDHGKT) contacts GTP. Thr26 serves as a coordination point for Mg(2+). Positions 60–64 (GITIN) are G2. The G3 stretch occupies residues 81 to 84 (DCPG). GTP contacts are provided by residues 81 to 85 (DCPGH) and 136 to 139 (NKCD). Residues 136–139 (NKCD) form a G4 region. Residues 174–176 (SAL) form a G5 region.

It belongs to the TRAFAC class translation factor GTPase superfamily. Classic translation factor GTPase family. EF-Tu/EF-1A subfamily. Monomer.

Its subcellular location is the cytoplasm. The enzyme catalyses GTP + H2O = GDP + phosphate + H(+). Functionally, GTP hydrolase that promotes the GTP-dependent binding of aminoacyl-tRNA to the A-site of ribosomes during protein biosynthesis. This is Elongation factor Tu 2 from Shewanella oneidensis (strain ATCC 700550 / JCM 31522 / CIP 106686 / LMG 19005 / NCIMB 14063 / MR-1).